The chain runs to 1496 residues: MTRILSVFKTAKTGVLNAAAHRYRGFSKAGVRLMSVKAQTANLVLEDGTKIKGYSFGHPASVAGEVIFNTGLGGYVEAVTDPSYHGQILTLTNPIIGNGGAPDTKARDAYGLMKYIESENIQASGLLVLDYSHEYSHWGAVKSLSEWLHEEKVPALCGIDTRMLAKKIRDNKGAVLGKIEFEGQPVEFIDPNKRNLIAEVSTKETKVFGKGNPVRIVAVDCGVKHNIIRQLVKRGAEVHLVPWNHDFSQMEYDGLLITSGPGNPELAKPLIQNLKKVFQSDRPEPIFGICKGNEIAALAAGGKTYRLPMANRGQNQPVMITLNGQAFITAQNHAYAVDNNSLPAGWKPLFVNINDQSNEGIMHETKPIFTSQFHPEANPGPVDTEFLFDVYMSLIKKGKGTTLTSVMPKPALQSKRIDVAKVLILGSGGLSIGQAGEFDYSGSQAVKAMKEENVKTVLMNPNIASVQTNEVGLKQADTVYFLPITPQFVTEVIKAEKTDGIILGMGGQTALNCGVELFKRGVLKEYGVRVLGTSVESIMFTEDRQLFSDKLNEIKEPIAPSFAVESVKDALEAADKIGYPVMIRSAYALGGLGSGLCPDKETLTDLATKALAMTNQILVERSVVGWKEIEYEVVRDAADNCVTVCNMENVDAMGVHTGDSIVVAPCQTLSNEECQMLRAVSIKVVRHLGIVGECNIQFALHPTSLEYVIIEVNARLSRSSALASKATGYPLAFIAAKIALGIPLPEIKNVVSGKTTACFEPSLDYMVTKIPRWDLDRFHGASGLIGSSMKSVGEVMAIGRTFEESFQKALRMCHPSVDGFTSNLPMNKAWSSDVNLRKEMAEPTSTRMYSMAKAIQSGISLDEINKLTAIDKWFLYKMQGILNMEKTLKGSRSESVPEETLRRAKQIGFSDRYIGKCLGLSETQTRELRLNKNVKPWVKQIDTLAAEYPAITNYLYLTYNGQEHDIKFDDHGMMVLGCGPYHIGSSVEFDWCAVSSIRTLRHVGKKTVVVNCNPETVSTDFDECDKLYFEELSQERIMDVFQLEQCDGCIISVGGQIPNNLAVPLYKNGVKIMGTSPMQIDRAEDRSIFSAVLDELQIAQAPWKAVNSLDDALQFTKTVGYPCLLRPSYVLSGSAMNVVYGEEELKTFLAEATRVSQEHPVVITKFIEGAREVEMDAVGKEGRVISHAISEHVEDAGVHSGDATLMIPTQSISQGAIEKVKIATKKIATAFAISGPFNVQFLVRGNDVLVIECNLRASRSFPFVSKTLGVDFIDVATKVMIGEKIDESSLPTLERPVIPADYVGIKAPMFSWPRLRGADPVLKCEMASTGEVACFGQNVYSAFLKAMISTGFKLPQKGILIGIQHSFRPHFLGTAQTLKDEGFKLYATEATADWLNANDITATPVAWPSQEGQSGPSSIYKLIKEGNIDMVINLPNNNTKYVRDNFAIRRTAVDTGTALLTNFQVVKMFAEAIKYSGDLDAKSLFHYRQFGGAKPS.

The N-terminal 33 residues, 1-33 (MTRILSVFKTAKTGVLNAAAHRYRGFSKAGVRL), are a transit peptide targeting the mitochondrion. The interval 34–214 (MSVKAQTANL…TKVFGKGNPV (181 aa)) is anthranilate phosphoribosyltransferase homolog. The Glutamine amidotransferase type-1 domain occupies 215–401 (RIVAVDCGVK…MSLIKKGKGT (187 aa)). The active-site For GATase activity is the C290. ATP-grasp domains follow at residues 548–740 (SDKL…KIAL) and 1090–1281 (SAVL…KVMI). Positions 1352–1496 (FKLPQKGILI…YRQFGGAKPS (145 aa)) constitute an MGS-like domain. Positions 1388, 1391, 1407, 1433, 1436, and 1445 each coordinate N-acetyl-L-glutamate.

The protein resides in the mitochondrion. The enzyme catalyses hydrogencarbonate + NH4(+) + 2 ATP = carbamoyl phosphate + 2 ADP + phosphate + 2 H(+). Its activity is regulated as follows. Requires N-acetyl-L-glutamate (NAG) as an allosteric activator. Functionally, involved in the urea cycle of ureotelic animals where the enzyme plays an important role in removing excess ammonia from the cell. In Aquarana catesbeiana (American bullfrog), this protein is Carbamoyl-phosphate synthase [ammonia], mitochondrial.